Here is a 1214-residue protein sequence, read N- to C-terminus: Protein charlatan (1214 aa).

Disordered regions lie at residues 1–20, 213–238, and 250–284; these read MATL…QSSN, HVNQ…RQEH, and SANA…GGRK. The span at 258–276 shows a compositional bias: low complexity; that stretch reads AQSTPTSAPSNSSGGSTSS. 2 consecutive C2H2-type zinc fingers follow at residues 305-327 and 333-356; these read YACT…ENIH and FQCY…LRMH. Disordered stretches follow at residues 367-397 and 463-488; these read RRHV…NVTI and PVAS…SGLL. Residues 473-485 are compositionally biased toward gly residues; sequence GSHGGNGNGGSGS. C2H2-type zinc fingers lie at residues 496–518 and 522–545; these read FTCC…LNTH and FVCL…LKVH. Disordered stretches follow at residues 741–790, 848–946, and 1062–1084; these read SASS…ATSP, NDED…SGPS, and LSTP…SNAS. Low complexity-rich tracts occupy residues 855-871, 885-896, 923-946, and 1071-1084; these read QQHQ…QQQQ, NNNNNNNSNNNN, SPGT…SGPS, and KAAP…SNAS.

Expressed in the PNS and CNS. In early blastoderm stages, it is ubiquitously expressed, then, before stage 5, it disappears from the poles of the embryo and faint stripes are visible. At stage 5, it also accumulates in the dorsal region, cephalic furrow ectodermal patches between the tracheal pits, where neurons of the PNS appear. In older embryos (stage 15) a strong expression is mostly restricted to the central nervous system (CNS) and PNS. In PNS, the pattern suggests that expression occur in many of the neurons of the ventral, lateral and dorsal clusters of neurons. In third instar wing disks, it is expressed in rows of cells on either side of the prospective anterior wing margin and in groups of cells that coincide with proneural clusters of ac/sc expression. Also expressed independently of ac/sc in certain areas of the disk, such as the postnotum and posterior dorsal proximal wing. Expressed in the proneural clusters of the leg disks and in the eye/antenna disk.

Its subcellular location is the nucleus. In terms of biological role, probable transcription factor involved in the development of the adult pattern of macrochaetae. Required for accumulation of achaete (ac) and scute (sc) in proneural clusters. Probably acts by binding to the proneural cluster-specific enhancers of the ac/sc complex and increasing enhancer efficiency, thereby acting as a stimulator of ac/sc expression in proneural clusters. Also required for correct development of the embryonic/larval peripheral nervous system (PNS). This is Protein charlatan (chn) from Drosophila melanogaster (Fruit fly).